A 65-amino-acid chain; its full sequence is U11-theraphotoxin-Cg1b (65 aa).

The signal sequence occupies residues 1–21 (MKTTILVVILGLTLLFALSAA). The propeptide occupies 22–29 (TELKDEER). 3 cysteine pairs are disulfide-bonded: Cys-31/Cys-45, Cys-38/Cys-50, and Cys-44/Cys-57.

This sequence belongs to the neurotoxin 10 (Hwtx-1) family. 32 (Jztx-16) subfamily. As to expression, expressed by the venom gland.

The protein resides in the secreted. In terms of biological role, probable ion channel inhibitor. In Chilobrachys guangxiensis (Chinese earth tiger tarantula), this protein is U11-theraphotoxin-Cg1b.